The sequence spans 120 residues: Ig heavy chain V region 36-65 (120 aa).

An Ig-like domain is found at 1-111 (VQLQQSGAEL…GGSYYFDYWG (111 aa)).

The sequence is that of Ig heavy chain V region 36-65 from Mus musculus (Mouse).